The primary structure comprises 105 residues: SH3 domain-binding glutamic acid-rich-like protein 2 (105 aa).

The short motif at 61-67 (KGNPLPP) is the SH3-binding element.

It belongs to the SH3BGR family.

The protein resides in the nucleus. The protein is SH3 domain-binding glutamic acid-rich-like protein 2 (sh3bgrl2) of Danio rerio (Zebrafish).